The sequence spans 829 residues: MAQPRYTRIDNRRPSSNYCSTVTVVVFVALCLVGIWMMTSSSVGPAQNVDEVSLDNKDGIKKQMTPPAEEGNGQKFEDAPVETPNEDKKGDGDASLPKEDESSSKQDNQEEKKEEKTKEEFTPSSETKSETEGGEDQKDDSKSENGGGGDLDEKKDLKDNSDEENPDTNEKQTKPETEDNELGEDGENQKQFESDNGEKKSIDDDKKSSDDDKENKTGNEDTETKTEKENTETNVDVQVEQEGQSKNETSGDLSPPGAQLELLNETTAQNGSFSTQATESKNEKEAQKGSGDKLDYKWALCNTTAGPDYIPCLDNVQAIRSLPSTKHYEHRERHCPDSPPTCLVPLPDGYKRPIEWPKSREKIWYTNVPHTKLAEYKGHQNWVKVTGEYLTFPGGGTQFKHGALHYIDFIQESVPAIAWGKRSRVVLDVGCGVASFGGFLFDRDVITMSLAPKDEHEAQVQFALERGIPAISAVMGTTRLPFPGRVFDIVHCARCRVPWHIEGGKLLLELNRVLRPGGFFVWSATPVYQKKTEDVEIWKAMSELIKKMCWELVSINKDTINGVGVATYRKPTSNECYKNRSEPVPPICADSDDPNASWKVPLQACMHTAPEDKTQRGSQWPEQWPARLEKAPFWLSSSQTGVYGKAAPEDFSADYEHWKRVVTKSYLNGLGINWASVRNVMDMRAVYGGFAAALRDLKVWVMNVVPIDSPDTLAIIYERGLFGIYHDWCESFSTYPRSYDLLHADHLFSKLKQRCNLTAVIAEVDRVLRPEGKLIVRDDAETIQQVEGMVKAMKWEVRMTYSKEKEGLLSVQKSIWRPSEVETLTYAIG.

The Cytoplasmic portion of the chain corresponds to 1–17 (MAQPRYTRIDNRRPSSN). The helical; Signal-anchor for type II membrane protein transmembrane segment at 18–38 (YCSTVTVVVFVALCLVGIWMM) threads the bilayer. Topologically, residues 39 to 829 (TSSSVGPAQN…EVETLTYAIG (791 aa)) are lumenal. Residues 55–258 (DNKDGIKKQM…TSGDLSPPGA (204 aa)) are disordered. Composition is skewed to basic and acidic residues over residues 85 to 143 (NEDK…DSKS), 151 to 160 (LDEKKDLKDN), 168 to 177 (TNEKQTKPET), and 187 to 231 (ENQK…KENT). N-linked (GlcNAc...) asparagine glycosylation is found at Asn215, Asn247, Asn264, and Asn270. Polar residues predominate over residues 241–252 (QEGQSKNETSGD). The segment at 271 to 291 (GSFSTQATESKNEKEAQKGSG) is disordered. Positions 280-291 (SKNEKEAQKGSG) are enriched in basic and acidic residues. N-linked (GlcNAc...) asparagine glycans are attached at residues Asn302, Asn579, Asn595, and Asn756.

The protein belongs to the methyltransferase superfamily.

It localises to the golgi apparatus membrane. In Arabidopsis thaliana (Mouse-ear cress), this protein is Probable methyltransferase PMT26.